Consider the following 199-residue polypeptide: Imidazoleglycerol-phosphate dehydratase (199 aa).

The protein belongs to the imidazoleglycerol-phosphate dehydratase family.

The protein resides in the cytoplasm. It catalyses the reaction D-erythro-1-(imidazol-4-yl)glycerol 3-phosphate = 3-(imidazol-4-yl)-2-oxopropyl phosphate + H2O. It functions in the pathway amino-acid biosynthesis; L-histidine biosynthesis; L-histidine from 5-phospho-alpha-D-ribose 1-diphosphate: step 6/9. This is Imidazoleglycerol-phosphate dehydratase from Desulfotalea psychrophila (strain LSv54 / DSM 12343).